Consider the following 139-residue polypeptide: DNA-directed RNA polymerase II subunit Rpb4 (139 aa).

It belongs to the eukaryotic RPB4 RNA polymerase subunit family. RNA polymerase II consists of 12 different subunits.

The protein localises to the nucleus. The protein resides in the chromosome. In terms of biological role, DNA-dependent RNA polymerase catalyzes the transcription of DNA into RNA using the four ribonucleoside triphosphates as substrates. Associates with POLR2G. This is DNA-directed RNA polymerase II subunit Rpb4 from Drosophila melanogaster (Fruit fly).